Consider the following 532-residue polypeptide: MACLLRSFQRISAGVFFLALWGMVVGDKLLVVPQDGSHWLSMKDIVEVLSDRGHEIVVVVPEVNLLLKESKYYTRKIYPVPYDQEELKNRYQSFGNNHFAERSFLTAPQTEYRNNMIVIGLYFINCQSLLQDRDTLNFFKESKFDALFTDPALPCGVILAEYLGLPSVYLFRGFPCSLEHTFSRSPDPVSYIPRCYTKFSDHMTFSQRVANFLVNLLEPYLFYCLFSKYEELASAVLKRDVDIITLYQKVSVWLLRYDFVLEYPRPVMPNMVFIGGINCKKRKDLSQEFEAYINASGEHGIVVFSLGSMVSEIPEKKAMAIADALGKIPQTVLWRYTGTRPSNLANNTILVKWLPQNDLLGHPMTRAFITHAGSHGVYESICNGVPMVMMPLFGDQMDNAKRMETKGAGVTLNVLEMTSEDLENALKAVINDKSYKENIMRLSSLHKDRPVEPLDLAVFWVEFVMRHKGAPHLRPAAHDLTWYQYHSLDVIGFLLAVVLTVAFITFKCCAYGYRKCLGKKGRVKKAHKSKTH.

Residues 1-26 form the signal peptide; it reads MACLLRSFQRISAGVFFLALWGMVVG. 2 N-linked (GlcNAc...) asparagine glycosylation sites follow: Asn-294 and Asn-346. The chain crosses the membrane as a helical span at residues 490–506; it reads VIGFLLAVVLTVAFITF.

The protein belongs to the UDP-glycosyltransferase family. As to quaternary structure, isoform 1 interacts with isoform 3/i2 suggesting that oligomerization is involved in negative regulation of transferase activity by isoform 3. Isoform 1 also interacts with respective i2 isoforms of UGT1A1, UGT1A3, UGT1A4, UGT1A7, UGT1A8, UGT1A9 and UGT1A10. Expressed in skin. Isoforms 1 and 3 are expressed in kidney and liver. Isoform 1 but not isoform 2 is expressed in colon, esophagus and small intestine.

Its subcellular location is the microsome. The protein resides in the endoplasmic reticulum membrane. The enzyme catalyses glucuronate acceptor + UDP-alpha-D-glucuronate = acceptor beta-D-glucuronoside + UDP + H(+). It carries out the reaction (5Z,8Z,11Z,14Z)-eicosatetraenoate + UDP-alpha-D-glucuronate = O-[(5Z),(8Z),(11Z),(14Z)-eicosatetraenoyl]-beta-D-glucuronate + UDP. The catalysed reaction is 15-hydroxy-(5Z,8Z,11Z,13E)-eicosatetraenoate + UDP-alpha-D-glucuronate = 15-O-(beta-D-glucuronosyl)-(5Z,8Z,11Z,14Z)-eicosatetraenoate + UDP + H(+). It catalyses the reaction (E)-ferulate + UDP-alpha-D-glucuronate = (E)-4-O-(beta-D-glucuronosyl)-ferulate + UDP + H(+). The enzyme catalyses (E)-ferulate + UDP-alpha-D-glucuronate = (E)-ferulic acid beta-D-glucuronate ester + UDP. Its function is as follows. UDP-glucuronosyltransferase (UGT) that catalyzes phase II biotransformation reactions in which lipophilic substrates are conjugated with glucuronic acid to facilitate their inactivation and excretion from the body. Essential for the elimination and detoxification of drugs, xenobiotics and endogenous compounds. Involved in the glucuronidation of arachidonic acid (AA) and AA-derived eicosanoids including 15-HETE and 20-HETE. Conjugates small planar phenolic molecules such as 4-nitrophenol, 1-naphthol, and 4-methylumbelliferone. The bulky phenol 4-hydroxybiphenyl, androgens and estrogens are not substrates. 2-hydroxybiphenyl is an excellent substrate. Involved in the glucuronidation of the phytochemical ferulic acid at the phenolic or the carboxylic acid group. In terms of biological role, isoform 3 lacks transferase activity but acts as a negative regulator of isoform 1. This Homo sapiens (Human) protein is UDP-glucuronosyltransferase 1A6.